The sequence spans 233 residues: Large ribosomal subunit protein uL1 (233 aa).

This sequence belongs to the universal ribosomal protein uL1 family. Part of the 50S ribosomal subunit.

Its function is as follows. Binds directly to 23S rRNA. The L1 stalk is quite mobile in the ribosome, and is involved in E site tRNA release. In terms of biological role, protein L1 is also a translational repressor protein, it controls the translation of the L11 operon by binding to its mRNA. The protein is Large ribosomal subunit protein uL1 of Rhizobium etli (strain ATCC 51251 / DSM 11541 / JCM 21823 / NBRC 15573 / CFN 42).